The primary structure comprises 616 residues: Dihydroxy-acid dehydratase (616 aa).

Residue D81 coordinates Mg(2+). C122 contacts [2Fe-2S] cluster. 2 residues coordinate Mg(2+): D123 and K124. K124 is subject to N6-carboxylysine. C195 lines the [2Fe-2S] cluster pocket. E491 contributes to the Mg(2+) binding site. Catalysis depends on S517, which acts as the Proton acceptor.

The protein belongs to the IlvD/Edd family. As to quaternary structure, homodimer. [2Fe-2S] cluster is required as a cofactor. The cofactor is Mg(2+).

The catalysed reaction is (2R)-2,3-dihydroxy-3-methylbutanoate = 3-methyl-2-oxobutanoate + H2O. The enzyme catalyses (2R,3R)-2,3-dihydroxy-3-methylpentanoate = (S)-3-methyl-2-oxopentanoate + H2O. The protein operates within amino-acid biosynthesis; L-isoleucine biosynthesis; L-isoleucine from 2-oxobutanoate: step 3/4. Its pathway is amino-acid biosynthesis; L-valine biosynthesis; L-valine from pyruvate: step 3/4. Functionally, functions in the biosynthesis of branched-chain amino acids. Catalyzes the dehydration of (2R,3R)-2,3-dihydroxy-3-methylpentanoate (2,3-dihydroxy-3-methylvalerate) into 2-oxo-3-methylpentanoate (2-oxo-3-methylvalerate) and of (2R)-2,3-dihydroxy-3-methylbutanoate (2,3-dihydroxyisovalerate) into 2-oxo-3-methylbutanoate (2-oxoisovalerate), the penultimate precursor to L-isoleucine and L-valine, respectively. The polypeptide is Dihydroxy-acid dehydratase (Salmonella paratyphi A (strain ATCC 9150 / SARB42)).